The primary structure comprises 212 residues: Probable octanoyltransferase (212 aa).

The BPL/LPL catalytic domain occupies 28–199 (GVSEEMILVT…NLETLLQRQE (172 aa)). Substrate-binding positions include 66 to 73 (RGGDATYH), 130 to 132 (SVG), and 143 to 145 (GVA). C161 acts as the Acyl-thioester intermediate in catalysis.

The protein belongs to the LipB family.

It is found in the cytoplasm. The catalysed reaction is octanoyl-[ACP] + L-lysyl-[protein] = N(6)-octanoyl-L-lysyl-[protein] + holo-[ACP] + H(+). It participates in protein modification; protein lipoylation via endogenous pathway; protein N(6)-(lipoyl)lysine from octanoyl-[acyl-carrier-protein]: step 1/2. Functionally, catalyzes the transfer of endogenously produced octanoic acid from octanoyl-acyl-carrier-protein onto the lipoyl domains of lipoate-dependent enzymes. Lipoyl-ACP can also act as a substrate although octanoyl-ACP is likely to be the physiological substrate. The polypeptide is Probable octanoyltransferase (Pyrobaculum arsenaticum (strain DSM 13514 / JCM 11321 / PZ6)).